A 296-amino-acid polypeptide reads, in one-letter code: HVA22-like protein i (296 aa).

Positions 146–296 (STPRPQPPQK…LRKTRSEESR (151 aa)) are disordered. Residues 180–193 (VSLSSSSSSSSSEN) are compositionally biased toward low complexity. Residues 223 to 233 (AGTTQIAQKSV) are compositionally biased toward polar residues. Residues 251–261 (QIEEVEGEAES) show a composition bias toward acidic residues. The segment covering 270–281 (GPKETVMEETIR) has biased composition (basic and acidic residues).

This sequence belongs to the DP1 family.

The chain is HVA22-like protein i (HVA22I) from Arabidopsis thaliana (Mouse-ear cress).